Here is a 218-residue protein sequence, read N- to C-terminus: MTCVKICGLRRKEDIDYVNLYKPQFAGFVFAESRRKVSKETARMLVKALLPQIKSVGIFVNEKKETVAEIVKYTGLDCVQLHGDETPEYVEKLKELLGRITEKRIEIWKAVRVKNKESLEIISEFDVDAFLLDAYVEGSYGGAGAVFDWQLAADVAAGHERIILAGGLNPENVKTAVAKVKPYGVDVSSGVETDGFKDAEKIRDFIMKVREADGGVLS.

It belongs to the TrpF family.

The enzyme catalyses N-(5-phospho-beta-D-ribosyl)anthranilate = 1-(2-carboxyphenylamino)-1-deoxy-D-ribulose 5-phosphate. Its pathway is amino-acid biosynthesis; L-tryptophan biosynthesis; L-tryptophan from chorismate: step 3/5. The polypeptide is N-(5'-phosphoribosyl)anthranilate isomerase (Acetivibrio thermocellus (strain ATCC 27405 / DSM 1237 / JCM 9322 / NBRC 103400 / NCIMB 10682 / NRRL B-4536 / VPI 7372) (Clostridium thermocellum)).